A 727-amino-acid polypeptide reads, in one-letter code: Long-chain-fatty-acid--[acyl-carrier-protein] ligase AEE15, chloroplastic (727 aa).

The N-terminal 66 residues, 1–66, are a transit peptide targeting the chloroplast; that stretch reads MQIRLKPDYS…PSFRRFRVHC (66 aa).

This sequence belongs to the ATP-dependent AMP-binding enzyme family.

It is found in the plastid. It localises to the chloroplast. The enzyme catalyses a long-chain fatty acid + holo-[ACP] + ATP = a long-chain fatty acyl-[ACP] + AMP + diphosphate. Functionally, probably involved in the activation of fatty acids to acyl-carrier-protein prior to fatty acid elongation in plastids. Acts on medium- to long-chain fatty acids. The chain is Long-chain-fatty-acid--[acyl-carrier-protein] ligase AEE15, chloroplastic (AAE15) from Arabidopsis thaliana (Mouse-ear cress).